Here is a 135-residue protein sequence, read N- to C-terminus: Histone H3 type 1 (135 aa).

Residues 1-40 (MARTKQTARKSTGGKAPRKQLATKAARKTPATGGVKKPHR) are disordered. Lys5 carries the N6-methyllysine modification. An N6-acetyllysine; alternate modification is found at Lys10. Lys10 bears the N6-methyllysine; alternate mark. Position 11 is a phosphoserine (Ser11). Thr12 carries the post-translational modification Phosphothreonine. Lys15, Lys19, and Lys24 each carry N6-acetyllysine. Position 28 is an N6-acetyllysine; alternate (Lys28). At Lys28 the chain carries N6-methyllysine; alternate. Residues Lys36 and Lys37 each carry the N6-methyllysine modification.

The protein belongs to the histone H3 family. As to quaternary structure, the nucleosome is a histone octamer containing two molecules each of H2A, H2B, H3 and H4 assembled in one H3-H4 heterotetramer and two H2A-H2B heterodimers. The octamer wraps approximately 147 bp of DNA. Acetylation is generally linked to gene activation. Acetylated to form H3K9ac (11%), H3K14ac (17%), H3K18ac (11%), H3K23ac (16%) and H3K27ac (7%). H3K4, H3K35 and H3K36 are not acetylated. H3K4me prevents acetylation. 32% of the histone H3 are acetylated with, on average, 2.4 acetyl-Lys. They are all continuously deacatylated and re-acetylated with a half-life of approximately 2 minutes. In terms of processing, monomethylated to form H3K4me1 (81%), H3K9me1 (16%), H3K27me1 (25%), H3K35me1 (25%) and H3K36me1 (5%). No methylation at H3K14, H3K18 and H3K23. Methylated by a protein complex that includes Mut11. Set1 methylates specifically H3K4. H3K4me1 is associated with silenced euchromatin. Set3 forms H3K9me1, while H3K9me2 is undetected. H3K9me1 is specifically associated with silent, multi-copy transgenes. Post-translationally, no phosphorylation detected.

Its subcellular location is the nucleus. The protein resides in the chromosome. Functionally, core component of nucleosome. Nucleosomes wrap and compact DNA into chromatin, limiting DNA accessibility to the cellular machineries which require DNA as a template. Histones thereby play a central role in transcription regulation, DNA repair, DNA replication and chromosomal stability. DNA accessibility is regulated via a complex set of post-translational modifications of histones, also called histone code, and nucleosome remodeling. In Chlamydomonas reinhardtii (Chlamydomonas smithii), this protein is Histone H3 type 1 (ch3-I).